Here is a 511-residue protein sequence, read N- to C-terminus: Probable mannosyl-oligosaccharide alpha-1,2-mannosidase 1B (511 aa).

An N-terminal signal peptide occupies residues 1 to 18 (MHLPSLSLAWALAGSSLA). N-linked (GlcNAc...) asparagine glycans are attached at residues Asn90 and Asn177. A disulfide bridge connects residues Cys327 and Cys356. Residue Glu370 is the Proton donor of the active site. N-linked (GlcNAc...) asparagine glycosylation is present at Asn433. Thr501 is a binding site for Ca(2+).

The protein belongs to the glycosyl hydrolase 47 family. Monomer. Requires Ca(2+) as cofactor. Mg(2+) serves as cofactor.

The protein localises to the cytoplasmic vesicle lumen. The enzyme catalyses N(4)-(alpha-D-Man-(1-&gt;2)-alpha-D-Man-(1-&gt;2)-alpha-D-Man-(1-&gt;3)-[alpha-D-Man-(1-&gt;2)-alpha-D-Man-(1-&gt;3)-[alpha-D-Man-(1-&gt;2)-alpha-D-Man-(1-&gt;6)]-alpha-D-Man-(1-&gt;6)]-beta-D-Man-(1-&gt;4)-beta-D-GlcNAc-(1-&gt;4)-beta-D-GlcNAc)-L-asparaginyl-[protein] (N-glucan mannose isomer 9A1,2,3B1,2,3) + 4 H2O = N(4)-(alpha-D-Man-(1-&gt;3)-[alpha-D-Man-(1-&gt;3)-[alpha-D-Man-(1-&gt;6)]-alpha-D-Man-(1-&gt;6)]-beta-D-Man-(1-&gt;4)-beta-D-GlcNAc-(1-&gt;4)-beta-D-GlcNAc)-L-asparaginyl-[protein] (N-glucan mannose isomer 5A1,2) + 4 beta-D-mannose. It catalyses the reaction N(4)-(alpha-D-Man-(1-&gt;2)-alpha-D-Man-(1-&gt;2)-alpha-D-Man-(1-&gt;3)-[alpha-D-Man-(1-&gt;3)-[alpha-D-Man-(1-&gt;2)-alpha-D-Man-(1-&gt;6)]-alpha-D-Man-(1-&gt;6)]-beta-D-Man-(1-&gt;4)-beta-D-GlcNAc-(1-&gt;4)-beta-D-GlcNAc)-L-asparaginyl-[protein] (N-glucan mannose isomer 8A1,2,3B1,3) + 3 H2O = N(4)-(alpha-D-Man-(1-&gt;3)-[alpha-D-Man-(1-&gt;3)-[alpha-D-Man-(1-&gt;6)]-alpha-D-Man-(1-&gt;6)]-beta-D-Man-(1-&gt;4)-beta-D-GlcNAc-(1-&gt;4)-beta-D-GlcNAc)-L-asparaginyl-[protein] (N-glucan mannose isomer 5A1,2) + 3 beta-D-mannose. Its pathway is protein modification; protein glycosylation. In terms of biological role, involved in the maturation of Asn-linked oligosaccharides. Progressively trims alpha-1,2-linked mannose residues from Man(9)GlcNAc(2) to produce Man(5)GlcNAc(2). In Aspergillus clavatus (strain ATCC 1007 / CBS 513.65 / DSM 816 / NCTC 3887 / NRRL 1 / QM 1276 / 107), this protein is Probable mannosyl-oligosaccharide alpha-1,2-mannosidase 1B (mns1B).